A 358-amino-acid polypeptide reads, in one-letter code: Phospho-N-acetylmuramoyl-pentapeptide-transferase (358 aa).

The next 10 membrane-spanning stretches (helical) occupy residues 25–45 (RTIYAVITALVVSFILGPWVI), 73–93 (TMGGILILASIVIPTLLWADL), 97–117 (YVWTTLFVILGYGLIGFTDDY), 134–154 (MFWQMLIAGGAVCFLVLVAGM), 172–192 (YLYIPFGMLVVVGASNAVNLT), 197–217 (GLAIGPVAINAATFLLFAYIA), 233–253 (GAGELAVLCGAMVGAGIGFLW), 261–281 (VFMGDVGSLSLGGGLGILAVI), 286–306 (MLLVIVGGIFVVEALSVIFQV), and 335–355 (KIIVRFWIITIILALVAISTL).

Belongs to the glycosyltransferase 4 family. MraY subfamily. Requires Mg(2+) as cofactor.

It localises to the cell inner membrane. It catalyses the reaction UDP-N-acetyl-alpha-D-muramoyl-L-alanyl-gamma-D-glutamyl-meso-2,6-diaminopimeloyl-D-alanyl-D-alanine + di-trans,octa-cis-undecaprenyl phosphate = di-trans,octa-cis-undecaprenyl diphospho-N-acetyl-alpha-D-muramoyl-L-alanyl-D-glutamyl-meso-2,6-diaminopimeloyl-D-alanyl-D-alanine + UMP. The protein operates within cell wall biogenesis; peptidoglycan biosynthesis. Functionally, catalyzes the initial step of the lipid cycle reactions in the biosynthesis of the cell wall peptidoglycan: transfers peptidoglycan precursor phospho-MurNAc-pentapeptide from UDP-MurNAc-pentapeptide onto the lipid carrier undecaprenyl phosphate, yielding undecaprenyl-pyrophosphoryl-MurNAc-pentapeptide, known as lipid I. The polypeptide is Phospho-N-acetylmuramoyl-pentapeptide-transferase (Geobacter sulfurreducens (strain ATCC 51573 / DSM 12127 / PCA)).